The sequence spans 446 residues: Tubulin alpha chain-like 3 (446 aa).

The MREC motif signature appears at 1-4 (MREC). Residues Gln-11, Glu-78, Ser-147, Gly-151, Thr-152, Thr-186, Asn-213, and Asn-235 each coordinate GTP. Glu-78 serves as a coordination point for Mg(2+). Glu-261 is an active-site residue.

Belongs to the tubulin family. As to quaternary structure, dimer of alpha and beta chains. A typical microtubule is a hollow water-filled tube with an outer diameter of 25 nm and an inner diameter of 15 nM. Alpha-beta heterodimers associate head-to-tail to form protofilaments running lengthwise along the microtubule wall with the beta-tubulin subunit facing the microtubule plus end conferring a structural polarity. Microtubules usually have 13 protofilaments but different protofilament numbers can be found in some organisms and specialized cells. Mg(2+) serves as cofactor. In terms of processing, some glutamate residues at the C-terminus are polyglycylated, resulting in polyglycine chains on the gamma-carboxyl group. Glycylation is mainly limited to tubulin incorporated into axonemes (cilia and flagella) whereas glutamylation is prevalent in neuronal cells, centrioles, axonemes, and the mitotic spindle. Both modifications can coexist on the same protein on adjacent residues, and lowering polyglycylation levels increases polyglutamylation, and reciprocally. Cilia and flagella glycylation is required for their stability and maintenance. Flagella glycylation controls sperm motility. Some glutamate residues at the C-terminus are polyglutamylated, resulting in polyglutamate chains on the gamma-carboxyl group. Polyglutamylation plays a key role in microtubule severing by spastin (SPAST). SPAST preferentially recognizes and acts on microtubules decorated with short polyglutamate tails: severing activity by SPAST increases as the number of glutamates per tubulin rises from one to eight, but decreases beyond this glutamylation threshold. Glutamylation is also involved in cilia motility.

The protein localises to the cytoplasm. It is found in the cytoskeleton. It catalyses the reaction GTP + H2O = GDP + phosphate + H(+). Its function is as follows. Tubulin is the major constituent of microtubules, a cylinder consisting of laterally associated linear protofilaments composed of alpha- and beta-tubulin heterodimers. Microtubules grow by the addition of GTP-tubulin dimers to the microtubule end, where a stabilizing cap forms. Below the cap, tubulin dimers are in GDP-bound state, owing to GTPase activity of alpha-tubulin. In Mus musculus (Mouse), this protein is Tubulin alpha chain-like 3 (Tubal3).